The chain runs to 291 residues: Serine/threonine-protein phosphatase Pgam5, mitochondrial (291 aa).

The chain crosses the membrane as a helical span at residues 7–23; it reads FACGTGAGLAAFYLQRL. The segment at 59–78 is disordered; it reads KSLVRPQKNEQPQEQNRYNS. Polar residues predominate over residues 67–77; it reads NEQPQEQNRYN.

It belongs to the phosphoglycerate mutase family. BPG-dependent PGAM subfamily. In terms of assembly, interacts with Pk92B/ASK1.

It is found in the mitochondrion outer membrane. It carries out the reaction O-phospho-L-seryl-[protein] + H2O = L-seryl-[protein] + phosphate. The enzyme catalyses O-phospho-L-threonyl-[protein] + H2O = L-threonyl-[protein] + phosphate. Its function is as follows. Displays phosphatase activity for serine/threonine residues, and dephosphorylates and activates Pk92B kinase. Has apparently no phosphoglycerate mutase activity. This Drosophila willistoni (Fruit fly) protein is Serine/threonine-protein phosphatase Pgam5, mitochondrial.